The sequence spans 860 residues: Alanine--tRNA ligase (860 aa).

Zn(2+) is bound by residues His553, His557, Cys655, and His659.

The protein belongs to the class-II aminoacyl-tRNA synthetase family. The cofactor is Zn(2+).

It localises to the cytoplasm. The catalysed reaction is tRNA(Ala) + L-alanine + ATP = L-alanyl-tRNA(Ala) + AMP + diphosphate. Functionally, catalyzes the attachment of alanine to tRNA(Ala) in a two-step reaction: alanine is first activated by ATP to form Ala-AMP and then transferred to the acceptor end of tRNA(Ala). Also edits incorrectly charged Ser-tRNA(Ala) and Gly-tRNA(Ala) via its editing domain. This is Alanine--tRNA ligase from Legionella pneumophila (strain Paris).